Consider the following 463-residue polypeptide: Steroidogenic factor 1 (463 aa).

Residues 10–85 constitute a DNA-binding region (nuclear receptor); the sequence is DELCPVCGDK…VGMRLEAVRA (76 aa). The NR C4-type zinc-finger motif lies at 13 to 33; the sequence is CPVCGDKVSGYHYGLLTCESC. Lys34, Lys38, and Lys72 each carry N6-acetyllysine. An NR C4-type zinc finger spans residues 49–73; the sequence is CTESQNCKIDKTQRKRCPYCRFQKC. A Glycyl lysine isopeptide (Lys-Gly) (interchain with G-Cter in SUMO) cross-link involves residue Lys119. The segment at 119-160 is disordered; it reads KLETGPSMGPPPQTDYPLAPALHPGAKGLAPAPPAGPPGDYE. The span at 135–148 shows a compositional bias: low complexity; it reads PLAPALHPGAKGLA. Residue Lys193 forms a Glycyl lysine isopeptide (Lys-Gly) (interchain with G-Cter in SUMO) linkage. The tract at residues 197–216 is disordered; the sequence is PEPYASPHEPAPPYGYPEPY. Ser202 bears the Phosphoserine; by CDK7 mark. Residues 205–216 show a composition bias toward pro residues; sequence EPAPPYGYPEPY. The NR LBD domain maps to 224-461; sequence GVPELILKLL…NLLIEMLHAK (238 aa). Residues Gly343, Tyr438, and Lys442 each contribute to the a 1,2-diacyl-sn-glycero-3-phosphocholine site.

The protein belongs to the nuclear hormone receptor family. NR5 subfamily. In terms of assembly, binds DNA as a monomer. Part of a complex consisting of SFPQ, NONO and NR5A1. Interacts with NR0B2, NCOA2 and PPARGC1A. Interacts with DGKQ and CDK7. Binds to and activated by HIPK3. Acetylation stimulates the transcriptional activity. Post-translationally, sumoylation reduces CDK7-mediated phosphorylation on Ser-202. In terms of processing, phosphorylated on Ser-202 by CDK7. This phosphorylation promotes transcriptional activity. As to expression, expressed in the pre-granulosa and Sertoli cells of the ovary and testis, respectively. In the testis it is also present in the interstitial cells. In the adult ovary it is expressed in the interstitial gland, and in the granulosa cells and theca interna of small to medium-sized antral follicles, but is not expressed in large antral follicles.

The protein localises to the nucleus. Transcriptional activator. Seems to be essential for sexual differentiation and formation of the primary steroidogenic tissues. Binds to the Ad4 site found in the promoter region of steroidogenic P450 genes such as CYP11A, CYP11B and CYP21B. Also regulates the AMH/Muellerian inhibiting substance gene as well as the AHCH and STAR genes. 5'-YCAAGGYC-3' and 5'-RRAGGTCA-3' are the consensus sequences for the recognition by NR5A1. The SFPQ-NONO-NR5A1 complex binds to the CYP17 promoter and regulates basal and cAMP-dependent transcriptional activity. Binds phosphatidylcholine and phospholipids with a phosphatidylinositol (PI) headgroup, in particular PI(3,4)P2 and PI(3,4,5)P3. Activated by the phosphorylation of NR5A1 by HIPK3 leading to increased steroidogenic gene expression upon cAMP signaling pathway stimulation. The protein is Steroidogenic factor 1 (NR5A1) of Notamacropus eugenii (Tammar wallaby).